The chain runs to 323 residues: Isoeugenol synthase 1 (323 aa).

NADP(+) is bound by residues 14-17, 36-47, 88-90, 113-115, K135, and 155-157; these read TGYL, VMPLKKNSDDSK, VPQ, SEF, and NSL. The Proton donor/acceptor role is filled by K135.

Belongs to the NmrA-type oxidoreductase family. As to expression, expressed in flowers, especially in corolla and tubes of petals, probably in both epidermal and mesophyll cell layers.

It carries out the reaction (E)-isoeugenol + acetate + NADP(+) = (E)-coniferyl acetate + NADPH. Its pathway is aromatic compound metabolism; phenylpropanoid biosynthesis. Inhibited by zinc and copper ions. Repressed by 4-bromo-cinnamyl acetate. Involved in the biosynthesis of the floral volatile isoeugenol. Catalyzes the synthesis of the phenylpropene isoeugenol from coniferyl acetate. Phenylpropenes are the primary constituents of various essential plant oils. They are produced as antimicrobial and antianimal compounds, or as floral attractants of pollinators. Isoeugenol is a characteristic aromatic constituent of spices and a floral volatile compound. This chain is Isoeugenol synthase 1, found in Petunia hybrida (Petunia).